We begin with the raw amino-acid sequence, 317 residues long: Protoheme IX farnesyltransferase (317 aa).

The next 9 membrane-spanning stretches (helical) occupy residues 43–63 (PISV…AGAT), 65–85 (PVSG…CAGA), 119–139 (ALYW…NLNP), 140–160 (IAWI…SLWL), 168–188 (IVIG…AVTG), 195–215 (VLIA…LAIF), 238–258 (LNWL…IYFV), 261–281 (WGLV…ALSV), and 292–312 (AWVL…SMMV).

It belongs to the UbiA prenyltransferase family. Protoheme IX farnesyltransferase subfamily. As to quaternary structure, interacts with CtaA.

The protein localises to the cell membrane. It carries out the reaction heme b + (2E,6E)-farnesyl diphosphate + H2O = Fe(II)-heme o + diphosphate. It participates in porphyrin-containing compound metabolism; heme O biosynthesis; heme O from protoheme: step 1/1. Converts heme B (protoheme IX) to heme O by substitution of the vinyl group on carbon 2 of heme B porphyrin ring with a hydroxyethyl farnesyl side group. This Desulforudis audaxviator (strain MP104C) protein is Protoheme IX farnesyltransferase.